Here is a 143-residue protein sequence, read N- to C-terminus: Fido domain-containing protein DDB_G0283145 (143 aa).

Residues 1 to 128 form the Fido domain; sequence MKGIIVSDGV…TSHLALIILN (128 aa). The chain crosses the membrane as a helical span at residues 49 to 69; it reads SSPYAVAAWLLHAFVSIHPFI.

It localises to the membrane. The chain is Fido domain-containing protein DDB_G0283145 from Dictyostelium discoideum (Social amoeba).